The following is a 178-amino-acid chain: MHSSALLCCLVLLTGVRASPGQGTQSENSCTRFPGNLPHMLRDLRDAFSRVKTFFQMKDQLDNILLKESLLEDFKGYLGCQALSEMIQFYLEEVMPQAENHDPDIKEHVNSLGENLKTLRLRLRRCHRFLPCENKSKAVEQVKNAFSKLQEKGVYKAMSEFDIFINYIEAYMTMKIQN.

A signal peptide spans 1-18 (MHSSALLCCLVLLTGVRA). Cystine bridges form between C30/C126 and C80/C132. N134 carries N-linked (GlcNAc...) asparagine glycosylation.

It belongs to the IL-10 family. In terms of assembly, homodimer. Interacts with IL10RA and IL10RB.

It localises to the secreted. In terms of biological role, major immune regulatory cytokine that acts on many cells of the immune system where it has profound anti-inflammatory functions, limiting excessive tissue disruption caused by inflammation. Mechanistically, IL10 binds to its heterotetrameric receptor comprising IL10RA and IL10RB leading to JAK1 and STAT2-mediated phosphorylation of STAT3. In turn, STAT3 translocates to the nucleus where it drives expression of anti-inflammatory mediators. Targets antigen-presenting cells (APCs) such as macrophages and monocytes and inhibits their release of pro-inflammatory cytokines including granulocyte-macrophage colony-stimulating factor /GM-CSF, granulocyte colony-stimulating factor/G-CSF, IL-1 alpha, IL-1 beta, IL-6, IL-8 and TNF-alpha. Also interferes with antigen presentation by reducing the expression of MHC-class II and co-stimulatory molecules, thereby inhibiting their ability to induce T cell activation. In addition, controls the inflammatory response of macrophages by reprogramming essential metabolic pathways including mTOR signaling. The sequence is that of Interleukin-10 (IL10) from Macaca mulatta (Rhesus macaque).